A 399-amino-acid chain; its full sequence is Elongation factor Tu (399 aa).

One can recognise a tr-type G domain in the interval 10–209 (KPHVNIGTIG…EVDAYIPTPV (200 aa)). The interval 19 to 26 (GHVDHGKT) is G1. 19–26 (GHVDHGKT) is a binding site for GTP. Threonine 26 contributes to the Mg(2+) binding site. Residues 60 to 64 (GITIA) are G2. Residues 81–84 (DCPG) form a G3 region. Residues 81–85 (DCPGH) and 136–139 (NKQD) contribute to the GTP site. The interval 136 to 139 (NKQD) is G4. The segment at 174-176 (SAL) is G5.

It belongs to the TRAFAC class translation factor GTPase superfamily. Classic translation factor GTPase family. EF-Tu/EF-1A subfamily. As to quaternary structure, monomer.

The protein localises to the cytoplasm. It catalyses the reaction GTP + H2O = GDP + phosphate + H(+). In terms of biological role, GTP hydrolase that promotes the GTP-dependent binding of aminoacyl-tRNA to the A-site of ribosomes during protein biosynthesis. The sequence is that of Elongation factor Tu from Helicobacter acinonychis (strain Sheeba).